The sequence spans 338 residues: 6-phosphogluconolactonase (338 aa).

It belongs to the cycloisomerase 2 family.

It carries out the reaction 6-phospho-D-glucono-1,5-lactone + H2O = 6-phospho-D-gluconate + H(+). Its pathway is carbohydrate degradation; pentose phosphate pathway; D-ribulose 5-phosphate from D-glucose 6-phosphate (oxidative stage): step 2/3. Functionally, catalyzes the hydrolysis of 6-phosphogluconolactone to 6-phosphogluconate. The sequence is that of 6-phosphogluconolactonase from Blochmanniella floridana.